A 153-amino-acid polypeptide reads, in one-letter code: Arginine repressor (153 aa).

It belongs to the ArgR family.

It localises to the cytoplasm. It participates in amino-acid biosynthesis; L-arginine biosynthesis [regulation]. In terms of biological role, regulates arginine biosynthesis genes. This chain is Arginine repressor, found in Acetivibrio thermocellus (strain ATCC 27405 / DSM 1237 / JCM 9322 / NBRC 103400 / NCIMB 10682 / NRRL B-4536 / VPI 7372) (Clostridium thermocellum).